Reading from the N-terminus, the 153-residue chain is UPF0756 membrane protein LCA_1031 (153 aa).

The next 4 helical transmembrane spans lie at 4–24 (WLFL…SLII), 52–72 (WGVT…QIGF), 85–105 (FIAV…VGLL), and 115–135 (LVFG…GPVI).

The protein belongs to the UPF0756 family.

The protein resides in the cell membrane. In Latilactobacillus sakei subsp. sakei (strain 23K) (Lactobacillus sakei subsp. sakei), this protein is UPF0756 membrane protein LCA_1031.